The following is a 287-amino-acid chain: MPIVKLVILGSGGAVPKADRMLPAIYLEDWLGHRVLLDAGEGVQYRLLQIGISPSSLTLIAVTHMHEDHILGLPGLVITSKFLGGRLKVLAPKSMHGALSKLGVEVADSYEEERFKIKCVEVCHTVDACGWLIQWDVGYKLDLSKTSGLPKWALTELIKGKPVKIGDRIITPEEVADPAHKRFKYLLYTGDTAPCPEMWKKVGSVDVLIHEATFADDVSPSKAHEEGHSTVADAIEAARALNAQVLILTHVSARYPDKSRHRELASRISPPPYIYIPEDFETLLVKL.

Positions 64, 66, 68, 69, 124, 191, and 250 each coordinate Zn(2+). The active-site Proton acceptor is the Asp-68.

This sequence belongs to the RNase Z family. As to quaternary structure, homodimer. It depends on Zn(2+) as a cofactor.

The enzyme catalyses Endonucleolytic cleavage of RNA, removing extra 3' nucleotides from tRNA precursor, generating 3' termini of tRNAs. A 3'-hydroxy group is left at the tRNA terminus and a 5'-phosphoryl group is left at the trailer molecule.. Functionally, zinc phosphodiesterase, which displays some tRNA 3'-processing endonuclease activity. Probably involved in tRNA maturation, by removing a 3'-trailer from precursor tRNA. The protein is Ribonuclease Z of Pyrobaculum aerophilum (strain ATCC 51768 / DSM 7523 / JCM 9630 / CIP 104966 / NBRC 100827 / IM2).